We begin with the raw amino-acid sequence, 317 residues long: Aquaporin-2 (317 aa).

Over 1 to 75 the chain is Cytoplasmic; the sequence is MSLRDDLTIN…RSQEFKMQHR (75 aa). The chain crosses the membrane as a helical span at residues 76–96; it reads EFLAEFIGTLILVLLTCGFCA. At 97–108 the chain is on the extracellular side; it reads EQTLNIEKSKSW. The helical transmembrane segment at 109 to 129 threads the bilayer; the sequence is LTSSLGSGLSVLIGICVAGHV. Residues 130-154 are Cytoplasmic-facing; it reads SGGHLNPAITIAFWVFSGFPIRKVP. The short motif at 135–137 is the NPA 1 element; it reads NPA. The helical transmembrane segment at 155–175 threads the bilayer; it reads MYITAQLLGAFSGAALLYSIV. The Extracellular portion of the chain corresponds to 176 to 208; the sequence is EPAISQFDHGKRQILGELGTAGIFGTYPPLYVG. The chain crosses the membrane as a helical span at residues 209 to 229; sequence TGSAVASEVVGTAMLLLVVMV. The Cytoplasmic portion of the chain corresponds to 230-242; that stretch reads TGHPNNLPFRTAQ. The helical transmembrane segment at 243-263 threads the bilayer; that stretch reads GAMIALGVTTISLCIGYTSGF. At 264–295 the chain is on the extracellular side; the sequence is SLNPARDFGPRLFTAVAGWGIDVFTVHHYYAL. The short motif at 266–268 is the NPA 2 element; the sequence is NPA. The chain crosses the membrane as a helical span at residues 296-316; sequence VPMFAPILGGLAGGFIYTVFI. Asp-317 is a topological domain (cytoplasmic).

This sequence belongs to the MIP/aquaporin (TC 1.A.8) family.

It localises to the cell membrane. The enzyme catalyses H2O(in) = H2O(out). It carries out the reaction glycerol(in) = glycerol(out). In terms of biological role, water channel required to facilitate the transport of water across membranes. Contributes to water uptake of spores during the early stages of spore germination. Aquaporins AQP1 and AQP2 act as extracellular pH sensors and enable the spores to hydrate under favorable conditions and to commence germination. Wounded vegetables and fruit present acidic pH, so the optimal pH range for germination is adapted to the relevant host pH. The chain is Aquaporin-2 from Rhizopus delemar (strain RA 99-880 / ATCC MYA-4621 / FGSC 9543 / NRRL 43880) (Mucormycosis agent).